The following is a 1224-amino-acid chain: Integrin alpha pat-2 (1224 aa).

A signal peptide spans 1–27 (MREGSFPRRTRLLCLLAAVVLISTVTS). Over 28 to 1153 (FNIDTKNVVL…ASEEGRDLPW (1126 aa)) the chain is Extracellular. FG-GAP repeat units lie at residues 29–96 (NIDT…TCRE), 110–173 (NGSH…KTEE), 180–235 (EPAR…TDRP), 236–292 (NTEY…MMIN), 293–347 (LTDE…KPQY), 364–423 (GKQL…GVRE), and 427–490 (QKIE…PESA). N-linked (GlcNAc...) asparagine glycans are attached at residues asparagine 74, asparagine 110, asparagine 230, and asparagine 292. A glycan (N-linked (GlcNAc...) asparagine) is linked at asparagine 610. A Cell attachment site motif is present at residues 622–624 (RGD). 3 N-linked (GlcNAc...) asparagine glycosylation sites follow: asparagine 681, asparagine 775, and asparagine 819. Disordered regions lie at residues 898–968 (LRIT…QNTG) and 981–1037 (DYEY…KARF). Positions 920–931 (REEDDESYEDET) are enriched in acidic residues. A compositionally biased stretch (basic and acidic residues) spans 955–964 (VYERDEDKIR). Residues 984–1003 (YIPDDQEYDGDDFEDDDEDF) show a composition bias toward acidic residues. Basic residues predominate over residues 1008-1023 (SKRVKRAPVPKKKKKE). Over residues 1024–1037 (GSRSGEPRSDKARF) the composition is skewed to basic and acidic residues. The helical transmembrane segment at 1154 to 1174 (WLYLLAILIGLAILILLILLL) threads the bilayer. Residues 1175–1224 (WRCGFFKRNRPPTEHAELRAEKQPAAHYADTQSRYAPQDQYSQGRHGQML) lie on the Cytoplasmic side of the membrane. A disordered region spans residues 1190-1224 (AELRAEKQPAAHYADTQSRYAPQDQYSQGRHGQML). The segment covering 1204–1224 (DTQSRYAPQDQYSQGRHGQML) has biased composition (polar residues).

The protein belongs to the integrin alpha chain family. In terms of assembly, heterodimer of an alpha and a beta subunit. Alpha pat-2 associates with beta pat-3.

It localises to the membrane. Its function is as follows. Required for muscle development probably through the regulation of the actin-myosin cytoskeleton. During the formation of neuromuscular junctions at the larval stage, negatively regulates membrane protrusion from body wall muscles, probably through lamins such as epi-1, lam-2 and unc-52. Required for distal tip cell migration and dorsal pathfinding. Required for egg-laying. May play a role in cell motility and cell-cell interactions. The polypeptide is Integrin alpha pat-2 (Caenorhabditis briggsae).